A 310-amino-acid polypeptide reads, in one-letter code: CRAL-TRIO domain-containing protein YKL091C (310 aa).

The 174-residue stretch at 101–274 (ERIKLAKMYP…KYGGTSVLHN (174 aa)) folds into the CRAL-TRIO domain.

This chain is CRAL-TRIO domain-containing protein YKL091C, found in Saccharomyces cerevisiae (strain ATCC 204508 / S288c) (Baker's yeast).